Consider the following 632-residue polypeptide: Extracellular metalloproteinase 5 (632 aa).

The signal sequence occupies residues 1–20 (MHGLLLAAGLLSLPLHVLAH). The propeptide occupies 21–244 (PQPGTSLAGR…HNVVDYVSHA (224 aa)). Residue asparagine 284 is glycosylated (N-linked (GlcNAc...) asparagine). Histidine 427 lines the Zn(2+) pocket. Residue glutamate 428 is part of the active site. A Zn(2+)-binding site is contributed by histidine 431. N-linked (GlcNAc...) asparagine glycans are attached at residues asparagine 591 and asparagine 620.

The protein belongs to the peptidase M36 family. The cofactor is Zn(2+).

It localises to the secreted. In terms of biological role, secreted metalloproteinase probably acting as a virulence factor. This Arthroderma otae (strain ATCC MYA-4605 / CBS 113480) (Microsporum canis) protein is Extracellular metalloproteinase 5 (MEP5).